We begin with the raw amino-acid sequence, 341 residues long: 4-(gamma-L-glutamylamino)butanoyl-[BtrI acyl-carrier protein] monooxygenase BtrO (341 aa).

This sequence belongs to the bacterial luciferase oxidoreductase family.

The catalysed reaction is 4-(gamma-L-glutamylamino)butanoyl-[BtrI ACP] + FMNH2 + O2 = 4-(gamma-L-glutamylamino)-(2S)-2-hydroxybutanoyl-[BtrI ACP] + FMN + H2O + H(+). Its pathway is antibiotic biosynthesis; butirosin biosynthesis. In terms of biological role, monooxygenase component of a two-component system involved in the biosynthesis of the side chain of the aminoglycoside antibiotics in the biosynthetic pathway of butirosin. Together with BtrV, mediates hydroxylation of gamma-L-Glu-GABA-S-BtrI. Not able to hydroxylate free substrates, activation by the acyl-carrier protein is mandatory. Octanoyl-S-[BtrI acyl-carrier protein] is also accepted as substrate. In Niallia circulans (Bacillus circulans), this protein is 4-(gamma-L-glutamylamino)butanoyl-[BtrI acyl-carrier protein] monooxygenase BtrO (btrO).